The primary structure comprises 165 residues: uncharacterized protein (165 aa).

6 helical membrane-spanning segments follow: residues 6-26 (ILFP…SGQA), 28-48 (LFSG…AFVY), 54-74 (AVTP…HFFA), 78-98 (WVWW…SLLV), 110-130 (AVSM…MAWL), and 138-158 (ALLK…LLLI).

It is found in the cell membrane. This is an uncharacterized protein from Bacillus subtilis (strain 168).